The chain runs to 1410 residues: DNA-directed RNA polymerase subunit beta' (1410 aa).

Positions 70, 72, 85, and 88 each coordinate Zn(2+). Residues D460, D462, and D464 each contribute to the Mg(2+) site. Zn(2+)-binding residues include C814, C888, C895, and C898.

The protein belongs to the RNA polymerase beta' chain family. The RNAP catalytic core consists of 2 alpha, 1 beta, 1 beta' and 1 omega subunit. When a sigma factor is associated with the core the holoenzyme is formed, which can initiate transcription. Mg(2+) is required as a cofactor. The cofactor is Zn(2+).

It carries out the reaction RNA(n) + a ribonucleoside 5'-triphosphate = RNA(n+1) + diphosphate. DNA-dependent RNA polymerase catalyzes the transcription of DNA into RNA using the four ribonucleoside triphosphates as substrates. This Shewanella denitrificans (strain OS217 / ATCC BAA-1090 / DSM 15013) protein is DNA-directed RNA polymerase subunit beta'.